A 317-amino-acid chain; its full sequence is Beta-sarcoglycan (317 aa).

The disordered stretch occupies residues 1-31; that stretch reads MAAAAAATEQQSSNGPVKKSMREKAVERRNV. Over 1–64 the chain is Cytoplasmic; it reads MAAAAAATEQ…GLRGRKGNLA (64 aa). Over residues 20–31 the composition is skewed to basic and acidic residues; that stretch reads SMREKAVERRNV. Residues 65–85 traverse the membrane as a helical; Signal-anchor for type II membrane protein segment; that stretch reads ICVIVLLFILAVINLIITLVI. At 86–317 the chain is on the extracellular side; that stretch reads WAVIRIGPNG…TSDNPCGDLY (232 aa). Residues N157, N210, and N257 are each glycosylated (N-linked (GlcNAc...) asparagine). 2 disulfide bridges follow: C287–C313 and C289–C306.

This sequence belongs to the sarcoglycan beta/delta/gamma/zeta family. As to quaternary structure, cross-link to form 2 major subcomplexes: one consisting of SGCB, SGCD and SGCG and the other consisting of SGCB and SGCD. The association between SGCB and SGCG is particularly strong while SGCA is loosely associated with the other sarcoglycans. Disulfide bonds are present.

The protein resides in the cell membrane. It localises to the sarcolemma. Its subcellular location is the cytoplasm. The protein localises to the cytoskeleton. Its function is as follows. Component of the sarcoglycan complex, a subcomplex of the dystrophin-glycoprotein complex which forms a link between the F-actin cytoskeleton and the extracellular matrix. This Bos taurus (Bovine) protein is Beta-sarcoglycan (SGCB).